The primary structure comprises 523 residues: MSQQVIIFDTTLRDGEQALQASLSVKEKLQIALALERMGVDVMEVGFPVSSPGDFESVQTIARQVKNSRVCALARCVEKDIDVAAESLKVAEAFRIHTFIATSPMHIATKLRSTLDEVIERAIYMVKRARNYTDDVEFSCEDAGRTPIADLARVVEAAINAGATTINIPDTVGYTMPFEFAGIISGLYERVPNIDKAIISVHTHDDLGLAVGNSLAAVHAGARQVEGAMNGIGERAGNCSLEEVIMAIKVRKDILNVHTAINHQEIWRTSQLVSQICNMPIPANKAIVGSSAFAHSSGIHQDGVLKNRENYEIMTPESIGLNQIQLNLTSRSGRAAVKHRMDEMGYKESEYNLDNLYDAFLKLADKKGQVFDYDLEALAFIGKQQEEPEHFRLDYFSVQSGSNDIATAAVKLACGEEVKAEAANGNGPVDAVYQAINRITDYNVELVKYSLTAKGHGKDALGQVDIVANYNGRRFHGVGLATDIVESSAKAMVHVLNNIWRAAEVEKELQRKAQHNENNKETV.

One can recognise a Pyruvate carboxyltransferase domain in the interval 5 to 267 (VIIFDTTLRD…HTAINHQEIW (263 aa)). The Mn(2+) site is built by Asp-14, His-202, His-204, and Asn-238. The tract at residues 392–523 (RLDYFSVQSG…QHNENNKETV (132 aa)) is regulatory domain.

Belongs to the alpha-IPM synthase/homocitrate synthase family. LeuA type 1 subfamily. As to quaternary structure, homodimer. Mn(2+) serves as cofactor.

Its subcellular location is the cytoplasm. The enzyme catalyses 3-methyl-2-oxobutanoate + acetyl-CoA + H2O = (2S)-2-isopropylmalate + CoA + H(+). The protein operates within amino-acid biosynthesis; L-leucine biosynthesis; L-leucine from 3-methyl-2-oxobutanoate: step 1/4. Catalyzes the condensation of the acetyl group of acetyl-CoA with 3-methyl-2-oxobutanoate (2-ketoisovalerate) to form 3-carboxy-3-hydroxy-4-methylpentanoate (2-isopropylmalate). The protein is 2-isopropylmalate synthase of Shigella sonnei (strain Ss046).